Reading from the N-terminus, the 215-residue chain is Proapoptotic nucleolar protein 1 (215 aa).

The tract at residues 35–215 is disordered; sequence RKGTPTARCL…RLPAPRSAST (181 aa). Residues 169–180 show a composition bias toward pro residues; it reads PRPPQHLSPPQP. The necessary for nucleolar localization stretch occupies residues 185-215; it reads MGAAEGSRRADTHHARRRRRARLPAPRSAST.

As to expression, widely expressed.

It localises to the nucleus. The protein localises to the nucleolus. Apoptosis-inducing protein that modulates the tumor suppressor function of CDKN2A/p14ARF. Enhances the stability of CDKN2A/p14ARF protein by protecting it from degradation. May act as a tumor suppressor. This chain is Proapoptotic nucleolar protein 1, found in Homo sapiens (Human).